Here is a 364-residue protein sequence, read N- to C-terminus: Geranylgeranyl pyrophosphate synthase janG (364 aa).

3 residues coordinate isopentenyl diphosphate: K83, R86, and H115. Positions 122 and 126 each coordinate Mg(2+). R131 provides a ligand contact to dimethylallyl diphosphate. Position 132 (R132) interacts with isopentenyl diphosphate. K209, T210, and Q243 together coordinate dimethylallyl diphosphate. Residue D246 coordinates Mg(2+). Dimethylallyl diphosphate is bound by residues N250, K260, and K270.

The protein belongs to the FPP/GGPP synthase family. Requires Mg(2+) as cofactor.

It catalyses the reaction isopentenyl diphosphate + dimethylallyl diphosphate = (2E)-geranyl diphosphate + diphosphate. The enzyme catalyses isopentenyl diphosphate + (2E)-geranyl diphosphate = (2E,6E)-farnesyl diphosphate + diphosphate. It carries out the reaction isopentenyl diphosphate + (2E,6E)-farnesyl diphosphate = (2E,6E,10E)-geranylgeranyl diphosphate + diphosphate. It functions in the pathway secondary metabolite biosynthesis. Geranylgeranyl pyrophosphate synthase; part of the gene cluster that mediates the biosynthesis of the indole diterpenes janthitremanes such as shearinine K or shearinine A. The geranylgeranyl diphosphate (GGPP) synthase janG catalyzes the first step in janthitremane biosynthesis via conversion of farnesyl pyrophosphate and isopentyl pyrophosphate into geranylgeranyl pyrophosphate (GGPP). Condensation of indole-3-glycerol phosphate with GGPP by the prenyl transferase janC then forms 3-geranylgeranylindole (3-GGI). Epoxidation by the FAD-dependent monooxygenase janM leads to a epoxidized-GGI that is substrate of the terpene cyclase janB for cyclization to yield paspaline. Paspaline is subsequently converted to 13-desoxypaspaline by the cytochrome P450 monooxygenase janP, via beta-PC-M6 in a series of alpha-face oxidations. The cytochrome P450 monooxygenase janQ is proposed to carry out sequential beta-face oxidation steps at C-7 and C-13 of 13-desoxypaspaline to form paspalicine and paspalinine respectively. The indole diterpene prenyltransferase janD may then convert paspalinine into shearinine K which is substrate of janO and/or additional enzymes for oxidation and cyclization to generate shearinine A. The chain is Geranylgeranyl pyrophosphate synthase janG from Penicillium janthinellum (Penicillium vitale).